The primary structure comprises 210 residues: SAP domain-containing ribonucleoprotein (210 aa).

N-acetylalanine is present on Ala-2. Residues 8–42 form the SAP domain; the sequence is LHKLKLAELKQECLARGLETKGIKQDLINRLQAYL. Lys-10 is modified (N6-acetyllysine). Acidic residues predominate over residues 45–64; the sequence is HAEEEANEEDVLGDETEEEE. Residues 45–87 are disordered; sequence HAEEEANEEDVLGDETEEEEPKPIELPVKEEEPPEKAVDMASE. The segment covering 65 to 87 has biased composition (basic and acidic residues); it reads PKPIELPVKEEEPPEKAVDMASE. Lys-142 is modified (N6-acetyllysine). A disordered region spans residues 162–210; it reads SSISRKSEDDEKLKKRKERFGIVTSSAGTGTTEDTEAKKRKRAERFGIA. The residue at position 163 (Ser-163) is a Phosphoserine. The span at 184 to 193 shows a compositional bias: polar residues; it reads VTSSAGTGTT.

It belongs to the SAP domain-containing ribonucleoprotein family. Interacts with DDX39A. Interacts with FUS. Interacts (via the C-terminal domain) with DDX39B; the interaction is direct and facilitates RNA binding of DDX39B. Component of the transcription/export (TREX) complex at least composed of ALYREF/THOC4, DDX39B, SARNP/CIP29, CHTOP and the THO subcomplex; TREX seems to have dynamic structure involving ATP-dependent remodeling; in the complex interacts directly with DDX39B in a ATP-dependent manner which bridges it to ALYREF/THOC4.

It is found in the nucleus. The protein localises to the nucleus speckle. Its function is as follows. Binds both single-stranded and double-stranded DNA with higher affinity for the single-stranded form. Specifically binds to scaffold/matrix attachment region DNA. Also binds single-stranded RNA. Enhances RNA unwinding activity of DDX39A. May participate in important transcriptional or translational control of cell growth, metabolism and carcinogenesis. Component of the TREX complex which is thought to couple mRNA transcription, processing and nuclear export, and specifically associates with spliced mRNA and not with unspliced pre-mRNA. The TREX complex is recruited to spliced mRNAs by a transcription-independent mechanism, binds to mRNA upstream of the exon-junction complex (EJC) and is recruited in a splicing- and cap-dependent manner to a region near the 5' end of the mRNA where it functions in mRNA export to the cytoplasm via the TAP/NXF1 pathway. Associates with DDX39B, which facilitates RNA binding of DDX39B and likely plays a role in mRNA export. This Mus musculus (Mouse) protein is SAP domain-containing ribonucleoprotein (Sarnp).